Reading from the N-terminus, the 130-residue chain is Small ribosomal subunit protein uS4 (130 aa).

Residue lysine 64 is modified to N6-acetyllysine. A Glycyl lysine isopeptide (Lys-Gly) (interchain with G-Cter in SUMO2) cross-link involves residue lysine 91. In terms of domain architecture, S4 RNA-binding spans 106–130 (RRLQTQVFKLGLAXSIHHXRVLIRQ). Lysine 114 is modified (N6-acetyllysine).

The protein belongs to the universal ribosomal protein uS4 family. As to quaternary structure, component of the small ribosomal subunit. Identified in a IGF2BP1-dependent mRNP granule complex containing untranslated mRNAs. Part of the small subunit (SSU) processome, composed of more than 70 proteins and the RNA chaperone small nucleolar RNA (snoRNA) U3.

It is found in the cytoplasm. Its subcellular location is the nucleus. The protein resides in the nucleolus. Its function is as follows. Component of the small ribosomal subunit. The ribosome is a large ribonucleoprotein complex responsible for the synthesis of proteins in the cell. Part of the small subunit (SSU) processome, first precursor of the small eukaryotic ribosomal subunit. During the assembly of the SSU processome in the nucleolus, many ribosome biogenesis factors, an RNA chaperone and ribosomal proteins associate with the nascent pre-rRNA and work in concert to generate RNA folding, modifications, rearrangements and cleavage as well as targeted degradation of pre-ribosomal RNA by the RNA exosome. The polypeptide is Small ribosomal subunit protein uS4 (RPS9) (Sus scrofa (Pig)).